The sequence spans 385 residues: Putative ribosomal RNA large subunit methyltransferase MJ1653 (385 aa).

The PUA domain maps to 2–81; it reads TTKLYVDFGG…LDENYIREKI (80 aa).

It belongs to the methyltransferase superfamily. RlmI family.

It localises to the cytoplasm. In Methanocaldococcus jannaschii (strain ATCC 43067 / DSM 2661 / JAL-1 / JCM 10045 / NBRC 100440) (Methanococcus jannaschii), this protein is Putative ribosomal RNA large subunit methyltransferase MJ1653.